Consider the following 237-residue polypeptide: Neural retina-specific leucine zipper protein (237 aa).

Glycyl lysine isopeptide (Lys-Gly) (interchain with G-Cter in SUMO) cross-links involve residues K20 and K24. Positions 23–57 (VKREPSEGRPGPPTASLGSTPYSSVPPSPTFSEPG) are disordered. Positions 30 to 93 (GRPGPPTASL…AGEALGLSPE (64 aa)) are minimal transactivation domain (MTD). Residues 159–185 (RLKQRRRTLKNRGYAQACRSKRLQQRR) are basic motif. Residues 159–222 (RLKQRRRTLK…DLYKARCDRL (64 aa)) enclose the bZIP domain. Residues 187–208 (LEAERARLAAQLDALRAEVARL) form a leucine-zipper region.

The protein belongs to the bZIP family. As to quaternary structure, interacts with FIZ1; this interaction represses transactivation. Interacts (via the leucine-zipper domain) with CRX. In terms of processing, phosphorylated. Post-translationally, disumoylated at Lys-20. Sumoylation modulates the transcriptional activity of NRL on RHO and NR2E3 promoters, and is required for normal rod differentiation. In terms of tissue distribution, expressed in the brain and the retina. Expressed strongly in rod and cone cells (at protein level).

The protein resides in the cytoplasm. It localises to the nucleus. Acts as a transcriptional activator which regulates the expression of several rod-specific genes, including RHO and PDE6B. Also functions as a transcriptional coactivator, stimulating transcription mediated by the transcription factor CRX and NR2E3. Binds to the rhodopsin promoter in a sequence-specific manner. The sequence is that of Neural retina-specific leucine zipper protein (NRL) from Homo sapiens (Human).